The sequence spans 312 residues: DNA-directed RNA polymerase subunit alpha (312 aa).

Positions 1 to 229 are alpha N-terminal domain (alpha-NTD); sequence MLQYQIDRVD…ALFQPLATVT (229 aa). Residues 241 to 312 are alpha C-terminal domain (alpha-CTD); that stretch reads SAESQIPLEE…ISLPQSRTTA (72 aa).

This sequence belongs to the RNA polymerase alpha chain family. In cyanobacteria the RNAP catalytic core is composed of 2 alpha, 1 beta, 1 beta', 1 gamma and 1 omega subunit. When a sigma factor is associated with the core the holoenzyme is formed, which can initiate transcription.

The catalysed reaction is RNA(n) + a ribonucleoside 5'-triphosphate = RNA(n+1) + diphosphate. Its function is as follows. DNA-dependent RNA polymerase catalyzes the transcription of DNA into RNA using the four ribonucleoside triphosphates as substrates. The polypeptide is DNA-directed RNA polymerase subunit alpha (Synechococcus sp. (strain RCC307)).